We begin with the raw amino-acid sequence, 150 residues long: Macrodomain Ter protein (150 aa).

Belongs to the MatP family. Homodimer.

The protein resides in the cytoplasm. In terms of biological role, required for spatial organization of the terminus region of the chromosome (Ter macrodomain) during the cell cycle. Prevents early segregation of duplicated Ter macrodomains during cell division. Binds specifically to matS, which is a 13 bp signature motif repeated within the Ter macrodomain. This is Macrodomain Ter protein from Erwinia tasmaniensis (strain DSM 17950 / CFBP 7177 / CIP 109463 / NCPPB 4357 / Et1/99).